The sequence spans 817 residues: General transcription factor 3C polypeptide 4 (817 aa).

Met1 carries the N-acetylmethionine modification. The segment at 1–40 is disordered; that stretch reads MSEADQALVGPKADEPSPPAEEKDEGGGKEAAADAAPGPS. Lys221 is covalently cross-linked (Glycyl lysine isopeptide (Lys-Gly) (interchain with G-Cter in SUMO2)). 2 positions are modified to phosphoserine: Ser600 and Ser607. The tract at residues 603–658 is disordered; it reads LLVDSPGMGDGEDEQQEEGTSKQGTKAGLQEKSKEGDTEETPEDSLTAGGDTGGRE. Residue Lys624 forms a Glycyl lysine isopeptide (Lys-Gly) (interchain with G-Cter in SUMO2) linkage. Residue Ser647 is modified to Phosphoserine.

It belongs to the TFIIIC subunit 4 family. In terms of assembly, part of the TFIIIC subcomplex TFIIIC2, consisting of six subunits, GTF3C1, GTF3C2, GTF3C3, GTF3C4, GTF3C5 and GTF3C6. Interacts with BRF1, GTF3C1, GTF3C2, GTF3C5, GTF3C6, POLR3C and POLR3F.

It is found in the nucleus. It carries out the reaction L-lysyl-[protein] + acetyl-CoA = N(6)-acetyl-L-lysyl-[protein] + CoA + H(+). Its function is as follows. Essential for RNA polymerase III to make a number of small nuclear and cytoplasmic RNAs, including 5S RNA, tRNA, and adenovirus-associated (VA) RNA of both cellular and viral origin. Has histone acetyltransferase activity (HAT) with unique specificity for free and nucleosomal H3. May cooperate with GTF3C5 in facilitating the recruitment of TFIIIB and RNA polymerase through direct interactions with BRF1, POLR3C and POLR3F. May be localized close to the A box. This Mus musculus (Mouse) protein is General transcription factor 3C polypeptide 4 (Gtf3c4).